The sequence spans 464 residues: MDKIVTRFAPSPTGYLHIGGLRTALFNYLYARANGGKFLLRIEDTDLARNSMEATKAIIESFEWAGLDYDGEVVYQSQRFDLYKTYIQQLLESKKAYYCYMSKEELDALRKEQEKNKQTPRYDNRYRDFTGIPPQGIQPVVRIKAPLEGNIEFEDGIKGQISINAKEIDDFIIARSDGTPTYNFVVAVDDALMGITDVIRGDDHLSNTPKQIIIYNALGFALPRFFHVPMILNSQGKKLSKRDGAMGVMDYAKMGYLPEAILNFLVRLGWSYGDKEIFSLEEMLELFNPNELNSSPSAYNEDKLLWLNQHYIKYMDNTLLEQLLGHFGVTKLSESKREILYPALKDRSNTLVSFAQGFNEVMNAPCSYDEKMRIKLDANATQWLNELCKNLNMASWEDNPNIIESYLHQFALEHQIKIGKLMPTLRCALLGKSGGIGVCEALAVLGIEESMRRIYTFIGYQNNI.

The 'HIGH' region motif lies at 10–20; the sequence is PSPTGYLHIGG. The short motif at 238 to 242 is the 'KMSKS' region element; it reads KLSKR. ATP is bound at residue Lys241.

The protein belongs to the class-I aminoacyl-tRNA synthetase family. Glutamate--tRNA ligase type 1 subfamily. As to quaternary structure, monomer.

It is found in the cytoplasm. It carries out the reaction tRNA(Glu) + L-glutamate + ATP = L-glutamyl-tRNA(Glu) + AMP + diphosphate. In terms of biological role, catalyzes the attachment of glutamate to tRNA(Glu) in a two-step reaction: glutamate is first activated by ATP to form Glu-AMP and then transferred to the acceptor end of tRNA(Glu). This is Glutamate--tRNA ligase 1 from Helicobacter hepaticus (strain ATCC 51449 / 3B1).